The chain runs to 261 residues: Indole-3-glycerol phosphate synthase (261 aa).

Belongs to the TrpC family.

The enzyme catalyses 1-(2-carboxyphenylamino)-1-deoxy-D-ribulose 5-phosphate + H(+) = (1S,2R)-1-C-(indol-3-yl)glycerol 3-phosphate + CO2 + H2O. The protein operates within amino-acid biosynthesis; L-tryptophan biosynthesis; L-tryptophan from chorismate: step 4/5. This is Indole-3-glycerol phosphate synthase from Paraburkholderia xenovorans (strain LB400).